A 131-amino-acid chain; its full sequence is UPF0102 protein CYA_0708 (131 aa).

The protein belongs to the UPF0102 family.

The sequence is that of UPF0102 protein CYA_0708 from Synechococcus sp. (strain JA-3-3Ab) (Cyanobacteria bacterium Yellowstone A-Prime).